A 451-amino-acid chain; its full sequence is Signal transduction histidine-protein kinase ArlS (451 aa).

The next 2 membrane-spanning stretches (helical) occupy residues 11–31 (IIVT…IIIF) and 156–176 (IIAL…SYVF). In terms of domain architecture, HAMP spans 178-231 (TQITKPLVSLSNKMIEIRRDGFQNKLQLNTNYEEIDNLANTFNEMMSQIEESFN). The Histidine kinase domain maps to 239 to 451 (DASHELRTPL…NKGTTFKIIF (213 aa)). At His242 the chain carries Phosphohistidine; by autocatalysis.

Autophosphorylated.

The protein localises to the cell membrane. The catalysed reaction is ATP + protein L-histidine = ADP + protein N-phospho-L-histidine.. In terms of biological role, member of the two-component regulatory system ArlS/ArlR involved in the regulation of adhesion, autolysis, multidrug resistance and virulence. ArlS probably functions as a sensor protein kinase which is autophosphorylated at a histidine residue and transfers its phosphate group to ArlR. The chain is Signal transduction histidine-protein kinase ArlS (arlS) from Staphylococcus aureus (strain bovine RF122 / ET3-1).